A 610-amino-acid chain; its full sequence is UvrABC system protein C (610 aa).

The 79-residue stretch at 16–94 (SQPGVYRMYD…IKLYQPRYNV (79 aa)) folds into the GIY-YIG domain. One can recognise a UVR domain in the interval 204–239 (DQVLTQLIARMEKASQDLAFEEAARIRDQIQAVRRV).

It belongs to the UvrC family. Interacts with UvrB in an incision complex.

It localises to the cytoplasm. Functionally, the UvrABC repair system catalyzes the recognition and processing of DNA lesions. UvrC both incises the 5' and 3' sides of the lesion. The N-terminal half is responsible for the 3' incision and the C-terminal half is responsible for the 5' incision. The polypeptide is UvrABC system protein C (Salmonella gallinarum (strain 287/91 / NCTC 13346)).